The primary structure comprises 367 residues: Biotin--protein ligase 1, chloroplastic (367 aa).

The N-terminal 37 residues, 1 to 37 (MEAVRSTTTLSNFHLLNILVLRSLKPLHRLSFSFSAS), are a transit peptide targeting the chloroplast. Residues 105–289 (IITHRFGRFL…KFEKFFDLFM (185 aa)) form the BPL/LPL catalytic domain. Biotin is bound by residues 122-124 (STH), Gln145, 149-151 (RGR), and Lys220.

It belongs to the biotin--protein ligase family. In terms of tissue distribution, expressed in roots, leaves, stems, flowers, siliques and seeds.

It localises to the plastid. The protein localises to the chloroplast. Its subcellular location is the cytoplasm. The protein resides in the cytosol. The enzyme catalyses apo-[3-methylcrotonoyl-CoA:carbon-dioxide ligase (ADP-forming)] + biotin + ATP = holo-[3-methylcrotonoyl-CoA:carbon-dioxide ligase (ADP-forming)] + AMP + diphosphate + H(+). It catalyses the reaction biotin + L-lysyl-[protein] + ATP = N(6)-biotinyl-L-lysyl-[protein] + AMP + diphosphate + H(+). Its function is as follows. Plays a major role in biotin-dependent carboxylase biotinylation. Catalyzes the addition of biotin to the biotin carboxyl carrier protein (BCCP) subunit of acetyl-CoA carboxylase. Can also biotinylate methylcrotonyl-CoA carboxylase. Is responsible for most, if not all, biotin--protein ligase activity in Arabidopsis. Is essential for plant viability and required for ovule development. In Arabidopsis thaliana (Mouse-ear cress), this protein is Biotin--protein ligase 1, chloroplastic.